Consider the following 426-residue polypeptide: Dihydroorotase (426 aa).

H62 and H64 together coordinate Zn(2+). Substrate contacts are provided by residues H64–R66 and N96. Residues D154, H181, and H234 each contribute to the Zn(2+) site. N280 lines the substrate pocket. D307 is a Zn(2+) binding site. The active site involves D307. Residues H311 and F325–G326 each bind substrate.

Belongs to the metallo-dependent hydrolases superfamily. DHOase family. Class I DHOase subfamily. Zn(2+) is required as a cofactor.

It catalyses the reaction (S)-dihydroorotate + H2O = N-carbamoyl-L-aspartate + H(+). It functions in the pathway pyrimidine metabolism; UMP biosynthesis via de novo pathway; (S)-dihydroorotate from bicarbonate: step 3/3. Catalyzes the reversible cyclization of carbamoyl aspartate to dihydroorotate. This is Dihydroorotase from Desulforapulum autotrophicum (strain ATCC 43914 / DSM 3382 / VKM B-1955 / HRM2) (Desulfobacterium autotrophicum).